Here is an 89-residue protein sequence, read N- to C-terminus: Small ribosomal subunit protein uS15 (89 aa).

Basic and acidic residues predominate over residues 1–11; the sequence is MSITAERKAEV. Residues 1–24 are disordered; it reads MSITAERKAEVIKTSATKAGDTGS.

This sequence belongs to the universal ribosomal protein uS15 family. Part of the 30S ribosomal subunit. Forms a bridge to the 50S subunit in the 70S ribosome, contacting the 23S rRNA.

In terms of biological role, one of the primary rRNA binding proteins, it binds directly to 16S rRNA where it helps nucleate assembly of the platform of the 30S subunit by binding and bridging several RNA helices of the 16S rRNA. Its function is as follows. Forms an intersubunit bridge (bridge B4) with the 23S rRNA of the 50S subunit in the ribosome. In Rhodopseudomonas palustris (strain TIE-1), this protein is Small ribosomal subunit protein uS15.